Here is a 104-residue protein sequence, read N- to C-terminus: Urease subunit beta (104 aa).

It belongs to the urease beta subunit family. As to quaternary structure, heterotrimer of UreA (gamma), UreB (beta) and UreC (alpha) subunits. Three heterotrimers associate to form the active enzyme.

The protein localises to the cytoplasm. It carries out the reaction urea + 2 H2O + H(+) = hydrogencarbonate + 2 NH4(+). It functions in the pathway nitrogen metabolism; urea degradation; CO(2) and NH(3) from urea (urease route): step 1/1. The protein is Urease subunit beta of Synechococcus sp. (strain RCC307).